Consider the following 469-residue polypeptide: Aspartyl/glutamyl-tRNA(Asn/Gln) amidotransferase subunit B (469 aa).

The protein belongs to the GatB/GatE family. GatB subfamily. In terms of assembly, heterotrimer of A, B and C subunits.

The enzyme catalyses L-glutamyl-tRNA(Gln) + L-glutamine + ATP + H2O = L-glutaminyl-tRNA(Gln) + L-glutamate + ADP + phosphate + H(+). The catalysed reaction is L-aspartyl-tRNA(Asn) + L-glutamine + ATP + H2O = L-asparaginyl-tRNA(Asn) + L-glutamate + ADP + phosphate + 2 H(+). Allows the formation of correctly charged Asn-tRNA(Asn) or Gln-tRNA(Gln) through the transamidation of misacylated Asp-tRNA(Asn) or Glu-tRNA(Gln) in organisms which lack either or both of asparaginyl-tRNA or glutaminyl-tRNA synthetases. The reaction takes place in the presence of glutamine and ATP through an activated phospho-Asp-tRNA(Asn) or phospho-Glu-tRNA(Gln). The polypeptide is Aspartyl/glutamyl-tRNA(Asn/Gln) amidotransferase subunit B (Methanococcus maripaludis (strain C6 / ATCC BAA-1332)).